We begin with the raw amino-acid sequence, 439 residues long: Maintenance of mitochondrial morphology protein 1 (439 aa).

Over 1 to 76 the chain is Lumenal; the sequence is MSQDLIETTA…NGNTWSFTQG (76 aa). A helical membrane pass occupies residues 77-97; that stretch reads LVIGQVSVIFIIIVFVKFFVF. The Cytoplasmic segment spans residues 98–439; it reads ADSSSHIPTK…TPGEYVNSNI (342 aa). Disordered stretches follow at residues 125–145, 309–336, and 405–425; these read KHSN…SLDS, MNGY…DGGT, and REPV…GTSA. An SMP-LTD domain is found at 165 to 395; the sequence is ASESLDWFNV…EPRFQVVRLP (231 aa). Composition is skewed to low complexity over residues 315–326 and 410–424; these read ENANGDGASSSN and KKTT…NGTS.

The protein belongs to the MMM1 family. In terms of assembly, homodimer. Component of the ER-mitochondria encounter structure (ERMES) or MDM complex, composed of MMM1, MDM10, MDM12 and MDM34. An MMM1 homodimer associates with one molecule of MDM12 on each side in a pairwise head-to-tail manner, and the SMP-LTD domains of MMM1 and MDM12 generate a continuous hydrophobic tunnel for phospholipid trafficking.

It localises to the endoplasmic reticulum membrane. Its function is as follows. Component of the ERMES/MDM complex, which serves as a molecular tether to connect the endoplasmic reticulum (ER) and mitochondria. Components of this complex are involved in the control of mitochondrial shape and protein biogenesis, and function in nonvesicular lipid trafficking between the ER and mitochondria. The MDM12-MMM1 subcomplex functions in the major beta-barrel assembly pathway that is responsible for biogenesis of all outer membrane beta-barrel proteins, and acts in a late step after the SAM complex. The MDM10-MDM12-MMM1 subcomplex further acts in the TOM40-specific pathway after the action of the MDM12-MMM1 complex. Essential for establishing and maintaining the structure of mitochondria and maintenance of mtDNA nucleoids. In Candida albicans (strain SC5314 / ATCC MYA-2876) (Yeast), this protein is Maintenance of mitochondrial morphology protein 1.